The following is a 341-amino-acid chain: Putative ankyrin repeat protein FPV031 (341 aa).

ANK repeat units follow at residues 23 to 55 (DRNS…FQET), 58 to 87 (DNLT…IINQ), 92 to 124 (CGNT…ITNN), 125 to 158 (DGFT…IRDN), and 163 to 195 (TGLT…YSTC).

This is Putative ankyrin repeat protein FPV031 (ANK3) from Fowlpox virus (strain NVSL) (FPV).